A 375-amino-acid chain; its full sequence is MQKLQIFVYIYLFVLIVAGPVDLNENSEQKEYVEKEGLCNACLWRQNNKSSRLEAIKIQILSKLRLETAPNISKDAIRQLLPKAPPLRELIDQYDVQRDDSSDGSLEDDDYHATTETVITMPTESDLLAEVEEKPKCCFFKFSSKIQYNKVVKAQLWIYLRPVKTPTTVFVQILRLIKPMKDGTRYTGIRSLKLDMNPGTGIWQSIDVKTVLQNWLKQPESNLGIEIKALDENGHNLAVTFPEPGEEGLNPFLEVKVTDTPKRSRRDFGLDCDEHSTESRCCRYPLTVDFEAFGWDWIIAPKRYKANYCSGECEFVFLQKYPHTHLVHQANPRGSAGPCCTPTKMSPINMLYFNGKEQIIYGKIPGMVVDRCGCS.

The signal sequence occupies residues 1–18 (MQKLQIFVYIYLFVLIVA). A propeptide spanning residues 19 to 266 (GPVDLNENSE…VTDTPKRSRR (248 aa)) is cleaved from the precursor. N-linked (GlcNAc...) asparagine glycosylation is found at Asn-48 and Asn-71. 4 disulfides stabilise this stretch: Cys-272–Cys-282, Cys-281–Cys-340, Cys-309–Cys-372, and Cys-313–Cys-374.

This sequence belongs to the TGF-beta family. Homodimer; disulfide-linked. Interacts with WFIKKN2, leading to inhibit its activity. Interacts with FSTL3. Synthesized as large precursor molecule that undergoes proteolytic cleavage to generate an N-terminal propeptide and a disulfide linked C-terminal dimer, which is the biologically active molecule. The circulating form consists of a latent complex of the C-terminal dimer and other proteins, including its propeptide, which maintain the C-terminal dimer in a latent, inactive state. Ligand activation requires additional cleavage of the prodomain by a tolloid-like metalloproteinase.

It is found in the secreted. In terms of biological role, acts specifically as a negative regulator of skeletal muscle growth. The chain is Growth/differentiation factor 8 (MSTN) from Aepyceros melampus (Impala).